Consider the following 195-residue polypeptide: ATP-dependent Clp protease proteolytic subunit (195 aa).

Serine 96 serves as the catalytic Nucleophile. The active site involves histidine 121.

The protein belongs to the peptidase S14 family. As to quaternary structure, fourteen ClpP subunits assemble into 2 heptameric rings which stack back to back to give a disk-like structure with a central cavity, resembling the structure of eukaryotic proteasomes.

The protein resides in the cytoplasm. The enzyme catalyses Hydrolysis of proteins to small peptides in the presence of ATP and magnesium. alpha-casein is the usual test substrate. In the absence of ATP, only oligopeptides shorter than five residues are hydrolyzed (such as succinyl-Leu-Tyr-|-NHMec, and Leu-Tyr-Leu-|-Tyr-Trp, in which cleavage of the -Tyr-|-Leu- and -Tyr-|-Trp bonds also occurs).. Its function is as follows. Cleaves peptides in various proteins in a process that requires ATP hydrolysis. Has a chymotrypsin-like activity. Plays a major role in the degradation of misfolded proteins. This Elusimicrobium minutum (strain Pei191) protein is ATP-dependent Clp protease proteolytic subunit.